The primary structure comprises 205 residues: Holliday junction branch migration complex subunit RuvA (205 aa).

Residues 1 to 64 (MIGRLRGVLV…EDAQLLYGFI (64 aa)) form a domain I region. Residues 65–143 (TKQERALFRL…SLLETSAGSE (79 aa)) are domain II. The segment at 144–156 (REFMLKSNYTPAP) is flexible linker. The interval 157–205 (VVNTAEEDAIAALLSLGYKPAQASKAVSAAFKEGMSSEDLIKSSLKSML) is domain III.

It belongs to the RuvA family. In terms of assembly, homotetramer. Forms an RuvA(8)-RuvB(12)-Holliday junction (HJ) complex. HJ DNA is sandwiched between 2 RuvA tetramers; dsDNA enters through RuvA and exits via RuvB. An RuvB hexamer assembles on each DNA strand where it exits the tetramer. Each RuvB hexamer is contacted by two RuvA subunits (via domain III) on 2 adjacent RuvB subunits; this complex drives branch migration. In the full resolvosome a probable DNA-RuvA(4)-RuvB(12)-RuvC(2) complex forms which resolves the HJ.

Its subcellular location is the cytoplasm. The RuvA-RuvB-RuvC complex processes Holliday junction (HJ) DNA during genetic recombination and DNA repair, while the RuvA-RuvB complex plays an important role in the rescue of blocked DNA replication forks via replication fork reversal (RFR). RuvA specifically binds to HJ cruciform DNA, conferring on it an open structure. The RuvB hexamer acts as an ATP-dependent pump, pulling dsDNA into and through the RuvAB complex. HJ branch migration allows RuvC to scan DNA until it finds its consensus sequence, where it cleaves and resolves the cruciform DNA. The sequence is that of Holliday junction branch migration complex subunit RuvA from Shewanella woodyi (strain ATCC 51908 / MS32).